The sequence spans 262 residues: Phosphatidylglycerol--prolipoprotein diacylglyceryl transferase (262 aa).

Transmembrane regions (helical) follow at residues 9–29 (LGPL…ILAV), 41–61 (IIPD…ILGA), 80–100 (IFAI…GALV), and 109–129 (LINT…AQSL). Arginine 131 contacts a 1,2-diacyl-sn-glycero-3-phospho-(1'-sn-glycerol). 3 helical membrane passes run 167–187 (QPTF…ILIF), 197–217 (GHIT…IEGM), and 226–246 (GLRV…MIVI).

Belongs to the Lgt family.

Its subcellular location is the cell membrane. The enzyme catalyses L-cysteinyl-[prolipoprotein] + a 1,2-diacyl-sn-glycero-3-phospho-(1'-sn-glycerol) = an S-1,2-diacyl-sn-glyceryl-L-cysteinyl-[prolipoprotein] + sn-glycerol 1-phosphate + H(+). It functions in the pathway protein modification; lipoprotein biosynthesis (diacylglyceryl transfer). Its function is as follows. Catalyzes the transfer of the diacylglyceryl group from phosphatidylglycerol to the sulfhydryl group of the N-terminal cysteine of a prolipoprotein, the first step in the formation of mature lipoproteins. This Streptococcus pneumoniae (strain Taiwan19F-14) protein is Phosphatidylglycerol--prolipoprotein diacylglyceryl transferase.